Consider the following 642-residue polypeptide: UvrABC system protein C (642 aa).

Residues 20-97 (ERCGVYRMFD…IKKFQPKFNI (78 aa)) form the GIY-YIG domain. The UVR domain maps to 207 to 242 (KELQENLSKKMEELSSQMRFEEAAEIRDRIKALSYV).

It belongs to the UvrC family. In terms of assembly, interacts with UvrB in an incision complex.

It is found in the cytoplasm. Its function is as follows. The UvrABC repair system catalyzes the recognition and processing of DNA lesions. UvrC both incises the 5' and 3' sides of the lesion. The N-terminal half is responsible for the 3' incision and the C-terminal half is responsible for the 5' incision. The protein is UvrABC system protein C of Rickettsia felis (strain ATCC VR-1525 / URRWXCal2) (Rickettsia azadi).